The primary structure comprises 78 residues: Sec-independent protein translocase protein TatA (78 aa).

Residues 1–21 traverse the membrane as a helical segment; it reads MGMPSMPELLIILLIVVLLFG. A disordered region spans residues 46–78; it reads DEEEVATENKKEIEEKTTASTTKTTADQDTTKA. Basic and acidic residues predominate over residues 52 to 62; sequence TENKKEIEEKT. The span at 63–78 shows a compositional bias: low complexity; that stretch reads TASTTKTTADQDTTKA.

Belongs to the TatA/E family. The Tat system comprises two distinct complexes: a TatABC complex, containing multiple copies of TatA, TatB and TatC subunits, and a separate TatA complex, containing only TatA subunits. Substrates initially bind to the TatABC complex, which probably triggers association of the separate TatA complex to form the active translocon.

Its subcellular location is the cell inner membrane. Its function is as follows. Part of the twin-arginine translocation (Tat) system that transports large folded proteins containing a characteristic twin-arginine motif in their signal peptide across membranes. TatA could form the protein-conducting channel of the Tat system. The chain is Sec-independent protein translocase protein TatA from Nitratiruptor sp. (strain SB155-2).